Here is a 407-residue protein sequence, read N- to C-terminus: Phosphoglycerate kinase (407 aa).

Substrate-binding positions include Asp-24–Asn-26, Arg-40, His-63–Arg-66, Arg-121, and Arg-154. Residues Lys-205, Glu-337, and Gly-363–Ser-366 each bind ATP.

Belongs to the phosphoglycerate kinase family. In terms of assembly, monomer.

It is found in the cytoplasm. It catalyses the reaction (2R)-3-phosphoglycerate + ATP = (2R)-3-phospho-glyceroyl phosphate + ADP. It participates in carbohydrate degradation; glycolysis; pyruvate from D-glyceraldehyde 3-phosphate: step 2/5. In Gloeobacter violaceus (strain ATCC 29082 / PCC 7421), this protein is Phosphoglycerate kinase.